A 575-amino-acid polypeptide reads, in one-letter code: Hemagglutinin-neuraminidase (575 aa).

The segment covering 1 to 10 has biased composition (basic and acidic residues); sequence MDGDRSKRDS. The interval 1–25 is disordered; sequence MDGDRSKRDSYWSTSPGGSTTKLVS. Residues 1–37 lie on the Intravirion side of the membrane; the sequence is MDGDRSKRDSYWSTSPGGSTTKLVSDSERSGKVDTWL. The interval 10–14 is incorporation in virion; that stretch reads SYWST. Over residues 11-24 the composition is skewed to polar residues; the sequence is YWSTSPGGSTTKLV. The helical transmembrane segment at 38 to 58 threads the bilayer; sequence LILAFTQWALSIATVIICIVI. Positions 59-140 are involved in interaction with F protein; the sequence is AARQGYSMER…RQELTQLCDS (82 aa). Topologically, residues 59–575 are virion surface; sequence AARQGYSMER…SIPKLCKAES (517 aa). A glycan (N-linked (GlcNAc...) asparagine; by host) is linked at N77. Cystine bridges form between C192/C216, C258/C271, C357/C469, and C463/C473. The involved in neuraminidase activity stretch occupies residues 254–259; it reads NRKSCS. N499 and N511 each carry an N-linked (GlcNAc...) asparagine; by host glycan. Residues C535 and C544 are joined by a disulfide bond.

The protein belongs to the paramyxoviruses hemagglutinin-neuraminidase family. In terms of assembly, homotetramer; composed of disulfide-linked homodimers. Interacts with F protein trimer. Post-translationally, N-glycosylated; glycans consist of a mixture of high mannose-type oligosaccharides and of complex-type oligosaccharides.

The protein localises to the virion membrane. It localises to the host cell membrane. The catalysed reaction is Hydrolysis of alpha-(2-&gt;3)-, alpha-(2-&gt;6)-, alpha-(2-&gt;8)- glycosidic linkages of terminal sialic acid residues in oligosaccharides, glycoproteins, glycolipids, colominic acid and synthetic substrates.. Its function is as follows. Attaches the virus to sialic acid-containing cell receptors and thereby initiating infection. Binding of HN protein to the receptor induces a conformational change that allows the F protein to trigger virion/cell membranes fusion. Functionally, neuraminidase activity ensures the efficient spread of the virus by dissociating the mature virions from the neuraminic acid containing glycoproteins. This is Hemagglutinin-neuraminidase (HN) from Cavia cutleri (Guinea pig).